The primary structure comprises 578 residues: Protein RIK (578 aa).

A disordered region spans residues 1–34; that stretch reads MTEDNDEARVPLSDSSTTNDASRTRQRRKRKWDK. The 68-residue stretch at 206–273 folds into the KH domain; the sequence is SSNVAARIRG…KSIDDAKRLA (68 aa). Positions 413–425 are enriched in polar residues; sequence ATSLSIPSDNASN. The interval 413–578 is disordered; that stretch reads ATSLSIPSDN…DPDEPLTTRS (166 aa). Positions 472-492 are enriched in pro residues; that stretch reads PPSPRSVMPPPPPKTIAPPPS. Composition is skewed to low complexity over residues 493 to 503 and 510 to 521; these read KTMSPPSSKSM and SKTMSPLSSKSM. Over residues 560 to 572 the composition is skewed to acidic residues; the sequence is YGDDEDDDDDPDE.

As to quaternary structure, interacts with AS1. As to expression, expressed in vegetative tissues.

It is found in the nucleus. The chain is Protein RIK (RIK) from Arabidopsis thaliana (Mouse-ear cress).